We begin with the raw amino-acid sequence, 1692 residues long: Tyrosine-protein phosphatase non-receptor type 23 (1692 aa).

The BRO1 domain occupies 8 to 394 (PMIWLDLKEA…AKIEDKNEVL (387 aa)). TPR repeat units lie at residues 250 to 283 (AVAHLHMGKQAEEQQKFGERVAYFQSALDKLNEA) and 374 to 407 (EEKAKLLREMLAKIEDKNEVLDQFMDSMQLDPET). Residues 552-639 (KAVLQNLKRI…RALTEANVQY (88 aa)) adopt a coiled-coil conformation. 3 disordered regions span residues 711–788 (DREL…PATH), 884–923 (DSVQAPISSHTAPRPNPTPALPQPCFPVPQPVPQSVPQPQ), and 944–1199 (TYSI…LLQP). A Phosphothreonine modification is found at threonine 744. The segment at 773 to 1186 (HFSPGPFPSS…SSSPESQHGG (414 aa)) is his. The span at 774–785 (FSPGPFPSSTGP) shows a compositional bias: low complexity. Residues 884 to 894 (DSVQAPISSHT) show a composition bias toward polar residues. Residues 897–923 (RPNPTPALPQPCFPVPQPVPQSVPQPQ) show a composition bias toward pro residues. Arginine 974 bears the Omega-N-methylarginine mark. Tandem repeats lie at residues 977–978 (PQ), 979–980 (AQ), 981–982 (AQ), 983–984 (PQ), 985–986 (PQ), 987–988 (PQ), 989–990 (PQ), 991–992 (PQ), 993–994 (PQ), 995–996 (PQ), 997–998 (PQ), 999–1000 (PQ), 1001–1002 (PQ), 1003–1004 (PQ), 1005–1006 (SQ), 1007–1008 (SQ), 1009–1010 (PQ), 1011–1012 (PQ), 1013–1014 (PQ), 1015–1016 (PQ), and 1017–1018 (PQ). The tract at residues 977–1018 (PQAQAQPQPQPQPQPQPQPQPQPQPQPQSQSQPQPQPQPQPQ) is 21 X 2 AA approximate tandem repeats of P-Q. Pro residues predominate over residues 984–1002 (QPQPQPQPQPQPQPQPQPQ). 2 stretches are compositionally biased toward pro residues: residues 1093 to 1102 (FPSPGPPHPH) and 1127 to 1165 (GPPPASQPTPSPHLVPSPAPSPGPGPVPSRPPTAEPPPC). Phosphoserine occurs at positions 1178 and 1179. Threonine 1187 is subject to Phosphothreonine. The region spanning 1248–1508 (DAIWRELQEA…KFCHEALVRH (261 aa)) is the Tyrosine-protein phosphatase domain. Cysteine 1448 functions as the Phosphocysteine intermediate in the catalytic mechanism. The disordered stretch occupies residues 1574–1638 (ASLPGLVEPP…PSSSLELLAS (65 aa)). Positions 1598-1612 (SSSPPPLSSPLPEAP) are enriched in pro residues. The span at 1620 to 1638 (VPEAPSLGPPSSSLELLAS) shows a compositional bias: low complexity. Residue arginine 1671 is modified to Omega-N-methylarginine.

The protein belongs to the protein-tyrosine phosphatase family. Non-receptor class subfamily. As to quaternary structure, interacts with GRAP2 and GRB2. Interacts with UBAP1 and CHMP4B.

The protein localises to the nucleus. It localises to the cytoplasm. It is found in the cytoplasmic vesicle. The protein resides in the endosome. Its subcellular location is the cytoskeleton. The protein localises to the cilium basal body. It catalyses the reaction O-phospho-L-tyrosyl-[protein] + H2O = L-tyrosyl-[protein] + phosphate. Functionally, plays a role in sorting of endocytic ubiquitinated cargos into multivesicular bodies (MVBs) via its interaction with the ESCRT-I complex (endosomal sorting complex required for transport I), and possibly also other ESCRT complexes. May act as a negative regulator of Ras-mediated mitogenic activity. Plays a role in ciliogenesis. This is Tyrosine-protein phosphatase non-receptor type 23 (Ptpn23) from Mus musculus (Mouse).